The sequence spans 138 residues: Thyrotropin subunit beta (138 aa).

The N-terminal stretch at 1-20 (MTATFLMSLLFGLAFGQTMS) is a signal peptide. Cystine bridges form between Cys22-Cys72, Cys36-Cys87, Cys39-Cys125, Cys47-Cys103, Cys51-Cys105, and Cys108-Cys115. Asn43 carries N-linked (GlcNAc...) asparagine glycosylation. The propeptide occupies 133–138 (LVGFPV).

It belongs to the glycoprotein hormones subunit beta family. Heterodimer of a common alpha chain and a unique beta chain which confers biological specificity to thyrotropin, lutropin, follitropin and gonadotropin.

It localises to the secreted. Functionally, indispensable for the control of thyroid structure and metabolism. This chain is Thyrotropin subunit beta (TSHB), found in Monodelphis domestica (Gray short-tailed opossum).